Here is a 291-residue protein sequence, read N- to C-terminus: 4-hydroxy-tetrahydrodipicolinate synthase (291 aa).

Thr45 contacts pyruvate. Tyr131 acts as the Proton donor/acceptor in catalysis. The Schiff-base intermediate with substrate role is filled by Lys159. Residue Ile202 participates in pyruvate binding.

This sequence belongs to the DapA family. As to quaternary structure, homotetramer; dimer of dimers.

It is found in the cytoplasm. It carries out the reaction L-aspartate 4-semialdehyde + pyruvate = (2S,4S)-4-hydroxy-2,3,4,5-tetrahydrodipicolinate + H2O + H(+). It functions in the pathway amino-acid biosynthesis; L-lysine biosynthesis via DAP pathway; (S)-tetrahydrodipicolinate from L-aspartate: step 3/4. In terms of biological role, catalyzes the condensation of (S)-aspartate-beta-semialdehyde [(S)-ASA] and pyruvate to 4-hydroxy-tetrahydrodipicolinate (HTPA). This Methanosarcina acetivorans (strain ATCC 35395 / DSM 2834 / JCM 12185 / C2A) protein is 4-hydroxy-tetrahydrodipicolinate synthase.